A 111-amino-acid polypeptide reads, in one-letter code: Nucleoid-associated protein TTE0040 (111 aa).

This sequence belongs to the YbaB/EbfC family. As to quaternary structure, homodimer.

Its subcellular location is the cytoplasm. It localises to the nucleoid. In terms of biological role, binds to DNA and alters its conformation. May be involved in regulation of gene expression, nucleoid organization and DNA protection. This chain is Nucleoid-associated protein TTE0040, found in Caldanaerobacter subterraneus subsp. tengcongensis (strain DSM 15242 / JCM 11007 / NBRC 100824 / MB4) (Thermoanaerobacter tengcongensis).